The sequence spans 183 residues: Copper metallothionein 2 (183 aa).

The tract at residues 1-35 is cys-rich copper-binding 1; it reads MAFNPNPEKTTSCCSTSKAQDKCTCPKGKCECETC. A spacer B1 region spans residues 36-45; the sequence is PKSTKTPGSG. The cys-rich copper-binding 2 stretch occupies residues 46–79; the sequence is PCNCGVKEKVSTCGCNGSGAACTCPPGQCACDSC. The tract at residues 80–88 is spacer B2; sequence PRKAKSVST. The segment at 89–110 is cys-rich copper-binding 3; it reads CGCGGSAAACSCPPGKCACDSC. The tract at residues 111-120 is spacer B3; that stretch reads PKQAQEKVSS. Residues 121-142 form a cys-rich copper-binding 4 region; that stretch reads CACNGSGGACTCPPGKCSCSGC. A spacer B4 region spans residues 143-156; it reads PAQAKENPADQPTT. Positions 157–183 are cys-rich copper-binding 5; sequence CGCQGVGVACTCPPGQCACDGCPAKAK.

It belongs to the metallothionein superfamily.

The protein resides in the cytoplasm. It is found in the cell cortex. In terms of biological role, copper metallothionein that protects the cell against copper toxicity by tightly chelating copper ions. Required for antioxidant-mediated growth rescue in the presence of fluconazole. Acts as a critical factors for lung colonization and virulence. This chain is Copper metallothionein 2, found in Cryptococcus neoformans var. grubii serotype A (strain H99 / ATCC 208821 / CBS 10515 / FGSC 9487) (Filobasidiella neoformans var. grubii).